The primary structure comprises 97 residues: Putative membrane protein insertion efficiency factor (97 aa).

The protein belongs to the UPF0161 family.

It localises to the cell membrane. Functionally, could be involved in insertion of integral membrane proteins into the membrane. This is Putative membrane protein insertion efficiency factor from Lactobacillus johnsonii (strain CNCM I-12250 / La1 / NCC 533).